Reading from the N-terminus, the 579-residue chain is Carotenoid-cleaving dioxygenase, mitochondrial (579 aa).

Residues His226, His286, His357, and His573 each coordinate Fe cation.

Belongs to the carotenoid oxygenase family. Fe(2+) is required as a cofactor. In terms of tissue distribution, highly expressed in retinal pigment epithelium. Also expressed in stomach, small intestine, liver, testis, kidney, adrenal gland, pancreas, heart, skeletal muscle and prostate (at protein level).

The protein localises to the mitochondrion. It carries out the reaction all-trans-beta-carotene + O2 = beta-ionone + all-trans-10'-apo-beta-carotenal. It catalyses the reaction 5-cis-lycopene + O2 = 5-cis-10'-apo-lycopenal + (3E,5E)-6,10-dimethylundeca-3,5,9-trien-2-one. The catalysed reaction is 13-cis-lycopene + O2 = 13-cis-10'-apo-lycopenal + (3E,5E)-6,10-dimethylundeca-3,5,9-trien-2-one. The enzyme catalyses lutein + O2 = (3R,6R)-hydroxy-alpha-ionone + (3R)-3-hydroxy-10'-apo-beta-carotenal. It carries out the reaction lutein + O2 = (3R,6R)-3-hydroxy-10'-apo-alpha-carotenal + (3R)-hydroxy-beta-ionone. It catalyses the reaction all-trans-zeaxanthin + 2 O2 = 4,9-dimethyldodeca-2,4,6,8,10-pentaenedial + 2 (3R)-hydroxy-beta-ionone. The catalysed reaction is all-trans-zeaxanthin + O2 = (3R)-3-hydroxy-10'-apo-beta-carotenal + (3R)-hydroxy-beta-ionone. The enzyme catalyses beta-cryptoxanthin + O2 = all-trans-10'-apo-beta-carotenal + (3R)-hydroxy-beta-ionone. It carries out the reaction all-trans-10'-apo-beta-carotenal + O2 = beta-ionone + 4,9-dimethyldodeca-2,4,6,8,10-pentaenedial. It catalyses the reaction (3R)-3-hydroxy-10'-apo-beta-carotenal + O2 = 4,9-dimethyldodeca-2,4,6,8,10-pentaenedial + (3R)-hydroxy-beta-ionone. The catalysed reaction is (3R,6R)-3-hydroxy-10'-apo-alpha-carotenal + O2 = (3R,6R)-hydroxy-alpha-ionone + 4,9-dimethyldodeca-2,4,6,8,10-pentaenedial. Broad specificity mitochondrial dioxygenase that mediates the asymmetric oxidative cleavage of carotenoids. Cleaves carotenes (pure hydrocarbon carotenoids) such as all-trans-beta-carotene and lycopene as well as xanthophylls (oxygenated carotenoids) such as zeaxanthin, lutein and beta-cryptoxanthin at both the 9,10 and the 9',10' carbon-carbon double bond. Through its function in carotenoids metabolism regulates oxidative stress and the production of important signaling molecules. This is Carotenoid-cleaving dioxygenase, mitochondrial from Homo sapiens (Human).